Here is an 864-residue protein sequence, read N- to C-terminus: DNA mismatch repair protein MutS (864 aa).

G607–S614 lines the ATP pocket.

Belongs to the DNA mismatch repair MutS family.

Its function is as follows. This protein is involved in the repair of mismatches in DNA. It is possible that it carries out the mismatch recognition step. This protein has a weak ATPase activity. This chain is DNA mismatch repair protein MutS, found in Neisseria meningitidis serogroup B (strain ATCC BAA-335 / MC58).